The following is a 227-amino-acid chain: Probable maleylacetoacetate isomerase 2 (227 aa).

A GST N-terminal domain is found at 14–97 (IQPILYSYWR…YLEETRPQRP (84 aa)). Residues 24–29 (SSCSWR), Q55, V69, 81–82 (ES), Q121, and 125–127 (NLI) contribute to the glutathione site. A GST C-terminal domain is found at 102-222 (DVHKRAKVRE…HPSNQPDCPP (121 aa)).

It belongs to the GST superfamily. Zeta family. Glutathione serves as cofactor.

The protein resides in the cytoplasm. It carries out the reaction 4-maleylacetoacetate = 4-fumarylacetoacetate. The catalysed reaction is RX + glutathione = an S-substituted glutathione + a halide anion + H(+). The protein operates within amino-acid degradation; L-phenylalanine degradation; acetoacetate and fumarate from L-phenylalanine: step 5/6. Its function is as follows. Catalyzes the glutathione dependent oxygenation of dichloroacetic acid to glyoxylic acid in vitro. Has no glutathione thioltransferase activity with 4-hydroxynonenal (4-HNE), adrenochrome, phenethyl isothiocyanate (PEITC), 5-hydroperoxyeicosatetraenoic acid ((5S)-HpETE), prostaglandin A2 (PGA2) or 2-hydroxyethyldisulfide (HED). The protein is Probable maleylacetoacetate isomerase 2 (GstZ2) of Drosophila melanogaster (Fruit fly).